The sequence spans 114 residues: Turripeptide OL22 (114 aa).

In terms of processing, contains 6 disulfide bonds. As to expression, expressed by the venom duct.

It localises to the secreted. In terms of biological role, acts as a neurotoxin by inhibiting an ion channel. The sequence is that of Turripeptide OL22 from Iotyrris olangoensis (Sea snail).